The chain runs to 266 residues: Undecaprenyl-diphosphatase (266 aa).

The next 8 helical transmembrane spans lie at 1 to 21 (MMSWLTIGVILGLVQGITEFL), 43 to 63 (ASVFEVAVQLGSIMAVVVIYW), 81 to 101 (LYGIWLLFLTTLPPGIIGFLF), 107 to 127 (TLFTIPSVIAALTTGSIFMLI), 145 to 165 (LTPKTALGIGFFECLALWPGF), 183 to 203 (HLAAEYSFIAAVPVMFAATGY), 219 to 239 (LFITGMICAFLAAWITIKVFI), and 245 to 265 (ISLRPFAYYRLLLAFIVYLCI).

The protein belongs to the UppP family.

It localises to the cell membrane. The enzyme catalyses di-trans,octa-cis-undecaprenyl diphosphate + H2O = di-trans,octa-cis-undecaprenyl phosphate + phosphate + H(+). Catalyzes the dephosphorylation of undecaprenyl diphosphate (UPP). Confers resistance to bacitracin. The polypeptide is Undecaprenyl-diphosphatase (Lawsonia intracellularis (strain PHE/MN1-00)).